We begin with the raw amino-acid sequence, 360 residues long: Phospho-N-acetylmuramoyl-pentapeptide-transferase (360 aa).

A run of 10 helical transmembrane segments spans residues 26-46, 74-94, 97-117, 132-152, 168-188, 199-219, 236-256, 263-283, 288-308, and 338-358; these read AILGLLTALMFSLWWGPKLIE, MGGLMILGAIFISVLLWGDLG, YVWVMLFVLGSFGMIGFIDDY, WKYILQSLAALIIAFFLYTTA, VMPQLGAVFIVLAYFTIVGSS, GLAIMPTVMVAAAFALIAYLS, SGELVIVCTAIVGAGLGFLWF, VFMGDVGSLSLGAALGAIAVL, ILLVIMGGVFVMETVSVILQV, and VIVRFWIISIFLVLLGLATLK.

It belongs to the glycosyltransferase 4 family. MraY subfamily. It depends on Mg(2+) as a cofactor.

It localises to the cell inner membrane. It catalyses the reaction UDP-N-acetyl-alpha-D-muramoyl-L-alanyl-gamma-D-glutamyl-meso-2,6-diaminopimeloyl-D-alanyl-D-alanine + di-trans,octa-cis-undecaprenyl phosphate = di-trans,octa-cis-undecaprenyl diphospho-N-acetyl-alpha-D-muramoyl-L-alanyl-D-glutamyl-meso-2,6-diaminopimeloyl-D-alanyl-D-alanine + UMP. It participates in cell wall biogenesis; peptidoglycan biosynthesis. In terms of biological role, catalyzes the initial step of the lipid cycle reactions in the biosynthesis of the cell wall peptidoglycan: transfers peptidoglycan precursor phospho-MurNAc-pentapeptide from UDP-MurNAc-pentapeptide onto the lipid carrier undecaprenyl phosphate, yielding undecaprenyl-pyrophosphoryl-MurNAc-pentapeptide, known as lipid I. The protein is Phospho-N-acetylmuramoyl-pentapeptide-transferase of Shewanella sp. (strain ANA-3).